We begin with the raw amino-acid sequence, 689 residues long: MQNIYLISEKEAKKLLKELADKIERYNHAYYIENNHLVSDAEYDQLFNTNLKLEQKFPHLILENSPSKKVGAKIANKFAKVTHQAPMLSLSNVFDEQDVKDFVDRIKNFLRLNEFAPIFCEPKIDGLSFSAIYKNGLLTIGATRGDGYIGEDMTANIKTIKNFPHKINNAPEFLEVRGEIYIEKQDFFNLNKEQEEQGRDKFANPRNAAAGSLRQLDSSVTAKRPLKYFVYSGGATEQNIASSQNELLKKLKEFGFRVNEISKLADSEEEIFAFYEYLKTNRENLSYEIDGVVYKLNDFALQNRMGFIARAPRFATAHKFPAIVGQTKLLSITVQVGRTGTLTPVAELEPIEIGGVTVSRATLHNFQEIIRKDVRIRDYVFLQRAGDVIPQIIGVDIGKRSTDATTFNTPLFCPSCNSKLHYIPEDIIIRCDNVLNCPAQNYERIRHFVSKNAMDIEGLGRKQVEFLIDKGLISNPLDIFLLKEKNEASLTKLENMDGWGRKSVENLFKNIEESRNVSLPRFIYALGIRHIGEQNAKLLAREFESYNNFISQIELLSKNDSNIYQKLNNLEGIGDKILVDIINFFDVKENIELIKKLGEVLNIEDYKETKEHSSLTGKIVVFTGSLPTTSRVEAKAMAEKLGAKVAVSVSSNTDLVIAGVDAGSKLKKAKELGIKIIDEEEWLTIVNNV.

NAD(+) contacts are provided by residues aspartate 40–aspartate 44, serine 89–leucine 90, and glutamate 121. The active-site N6-AMP-lysine intermediate is lysine 123. NAD(+) is bound by residues arginine 144, glutamate 179, lysine 295, and lysine 319. Positions 413, 416, 431, and 437 each coordinate Zn(2+). A BRCT domain is found at lysine 610–valine 689.

This sequence belongs to the NAD-dependent DNA ligase family. LigA subfamily. The cofactor is Mg(2+). It depends on Mn(2+) as a cofactor.

The enzyme catalyses NAD(+) + (deoxyribonucleotide)n-3'-hydroxyl + 5'-phospho-(deoxyribonucleotide)m = (deoxyribonucleotide)n+m + AMP + beta-nicotinamide D-nucleotide.. Functionally, DNA ligase that catalyzes the formation of phosphodiester linkages between 5'-phosphoryl and 3'-hydroxyl groups in double-stranded DNA using NAD as a coenzyme and as the energy source for the reaction. It is essential for DNA replication and repair of damaged DNA. This chain is DNA ligase, found in Rickettsia canadensis (strain McKiel).